We begin with the raw amino-acid sequence, 656 residues long: tRNA(Met) cytidine acetyltransferase TmcA (656 aa).

ATP is bound by residues Q145, 167–176, and R291; that span reads GRGKSALLGM. Residues 368–542 enclose the N-acetyltransferase domain; it reads SEGKYNRQFF…SGCYSAIALK (175 aa). Residues 474 to 476, 481 to 487, and E510 contribute to the acetyl-CoA site; these read IAV and QQKGIGQ.

This sequence belongs to the RNA cytidine acetyltransferase family. TmcA subfamily.

It localises to the cytoplasm. The enzyme catalyses cytidine(34) in elongator tRNA(Met) + acetyl-CoA + ATP + H2O = N(4)-acetylcytidine(34) in elongator tRNA(Met) + ADP + phosphate + CoA + H(+). Catalyzes the formation of N(4)-acetylcytidine (ac(4)C) at the wobble position of tRNA(Met), by using acetyl-CoA as an acetyl donor and ATP (or GTP). This is tRNA(Met) cytidine acetyltransferase TmcA from Haemophilus influenzae (strain ATCC 51907 / DSM 11121 / KW20 / Rd).